A 306-amino-acid chain; its full sequence is Ribosomal protein L11 methyltransferase (306 aa).

S-adenosyl-L-methionine is bound by residues Thr154, Gly179, Asp201, and Asn242.

The protein belongs to the methyltransferase superfamily. PrmA family.

Its subcellular location is the cytoplasm. It catalyses the reaction L-lysyl-[protein] + 3 S-adenosyl-L-methionine = N(6),N(6),N(6)-trimethyl-L-lysyl-[protein] + 3 S-adenosyl-L-homocysteine + 3 H(+). Its function is as follows. Methylates ribosomal protein L11. This is Ribosomal protein L11 methyltransferase from Xanthomonas axonopodis pv. citri (strain 306).